A 319-amino-acid polypeptide reads, in one-letter code: MATTKPYRVLLYYMYTTIENPEEFAAEHLAFCNSLELKGRILVAKEGINGTCSGTVEQTEKYMEAMNNDPRFDGIVFKIDEADGHAFKKMHVRPRPELVTLRLEDDINPHEITGKYLEPKDFYEAMKQEDTVIIDARNDYEFDLGHFKGAIKPDIESFRELPDWIRENKEVLEGKKILTYCTGGIRCEKFSGWLVREGYEDVSQLHGGIVTYGKDPEVQGELWDGQCYVFDERIAVPVNQKEHVIVGKDHFTGEPCERYVNCSNPECNKKILCSEENEAKYLRACSHECRVSPRNRYVIQHELTEEQVAAALEKIEAGK.

Residues 127-221 form the Rhodanese domain; it reads KQEDTVIIDA…YGKDPEVQGE (95 aa). Cys-181 acts as the Cysteine persulfide intermediate in catalysis.

Belongs to the TrhO family.

It carries out the reaction uridine(34) in tRNA + AH2 + O2 = 5-hydroxyuridine(34) in tRNA + A + H2O. In terms of biological role, catalyzes oxygen-dependent 5-hydroxyuridine (ho5U) modification at position 34 in tRNAs. This chain is tRNA uridine(34) hydroxylase, found in Bacillus cereus (strain AH187).